A 497-amino-acid chain; its full sequence is Probable malate:quinone oxidoreductase (497 aa).

It belongs to the MQO family. FAD serves as cofactor.

It carries out the reaction (S)-malate + a quinone = a quinol + oxaloacetate. It participates in carbohydrate metabolism; tricarboxylic acid cycle; oxaloacetate from (S)-malate (quinone route): step 1/1. This chain is Probable malate:quinone oxidoreductase, found in Prochlorococcus marinus subsp. pastoris (strain CCMP1986 / NIES-2087 / MED4).